A 491-amino-acid polypeptide reads, in one-letter code: Acetyl-coenzyme A carboxylase carboxyl transferase subunit beta, chloroplastic (491 aa).

Residues Ala26–Gly49 form a disordered region. The segment covering Gly32–Ser41 has biased composition (polar residues). One can recognise a CoA carboxyltransferase N-terminal domain in the interval Leu222–Arg491. Zn(2+) is bound by residues Cys226, Cys229, Cys245, and Cys248. The segment at Cys226–Cys248 adopts a C4-type zinc-finger fold.

It belongs to the AccD/PCCB family. Acetyl-CoA carboxylase is a heterohexamer composed of biotin carboxyl carrier protein, biotin carboxylase and 2 subunits each of ACCase subunit alpha and ACCase plastid-coded subunit beta (accD). It depends on Zn(2+) as a cofactor.

The protein localises to the plastid. Its subcellular location is the chloroplast stroma. The catalysed reaction is N(6)-carboxybiotinyl-L-lysyl-[protein] + acetyl-CoA = N(6)-biotinyl-L-lysyl-[protein] + malonyl-CoA. Its pathway is lipid metabolism; malonyl-CoA biosynthesis; malonyl-CoA from acetyl-CoA: step 1/1. In terms of biological role, component of the acetyl coenzyme A carboxylase (ACC) complex. Biotin carboxylase (BC) catalyzes the carboxylation of biotin on its carrier protein (BCCP) and then the CO(2) group is transferred by the transcarboxylase to acetyl-CoA to form malonyl-CoA. This is Acetyl-coenzyme A carboxylase carboxyl transferase subunit beta, chloroplastic from Ceratophyllum demersum (Rigid hornwort).